We begin with the raw amino-acid sequence, 338 residues long: 4'-phosphopantetheinyl transferase (338 aa).

The protein belongs to the P-Pant transferase superfamily.

The enzyme catalyses apo-[ACP] + CoA = holo-[ACP] + adenosine 3',5'-bisphosphate + H(+). Its function is as follows. Acyl-carrier-protein synthase that transfers the 4'-phosphopantetheine moiety from coenzyme A to a Ser of an acyl-carrier-protein. The 4'-phosphopantetheine (4'-PPT) portion of CoA provides the essential prosthetic group for a number of carrier proteins and multi-domain enzymes, priming them for the acceptance of acyl building blocks in fatty acid synthesis and many aspects of secondary metabolism mediated by polyketide synthases (PKSs) and non-ribosomal peptide synthetases (NRPSs). Plays a key role in liamocins biosynthesis by activationg the HR-PKS PKS1 that produces 3,5-dihydroxydecanoic acid, a precursor of liamocins. In Aureobasidium melanogenum (Aureobasidium pullulans var. melanogenum), this protein is 4'-phosphopantetheinyl transferase.